Here is an 84-residue protein sequence, read N- to C-terminus: RNA-binding protein Hfq (84 aa).

Residues 9 to 68 (DPYLNTLRKERVPVSIYLVNGIKLQGQIESFDQFVILLKNTVSQMVYKHAISTVVPSRPV) enclose the Sm domain.

This sequence belongs to the Hfq family. In terms of assembly, homohexamer.

RNA chaperone that binds small regulatory RNA (sRNAs) and mRNAs to facilitate mRNA translational regulation in response to envelope stress, environmental stress and changes in metabolite concentrations. Also binds with high specificity to tRNAs. The sequence is that of RNA-binding protein Hfq from Azotobacter vinelandii (strain DJ / ATCC BAA-1303).